A 719-amino-acid polypeptide reads, in one-letter code: Protein ENHANCED DISEASE RESISTANCE 2-like (719 aa).

In terms of domain architecture, PH spans 3-110; sequence KVVYEGWMVR…WKEKIECVID (108 aa). The segment at 134-173 is disordered; the sequence is AGRTASSSDHESPFSALEDENDSQRDLLRRTTIGNGPPES. An START domain is found at 180-392; sequence EFDAELSNQS…VSGLREWFSQ (213 aa). Positions 414 to 478 are disordered; the sequence is ALGKGGKHHH…ETDAKKTEEP (65 aa). Positions 426–439 are enriched in polar residues; it reads SLSIDQTNGASRNS. Over residues 442–461 the composition is skewed to acidic residues; that stretch reads MDEDSDDDDEFQIPDSEPEP. Positions 462 to 477 are enriched in basic and acidic residues; sequence ETSKQDQETDAKKTEE. Residues 665 to 685 traverse the membrane as a helical segment; the sequence is GVLGLVIGVITSLVVEMAFLV.

The protein resides in the endoplasmic reticulum membrane. It is found in the cell membrane. It localises to the endosome membrane. Binds to phosphatidylinositol-4-phosphate (PtdIns(4)P). May regulate the salicylic acid- (SA-) mediated resistance to pathogens. The protein is Protein ENHANCED DISEASE RESISTANCE 2-like (EDR2L) of Arabidopsis thaliana (Mouse-ear cress).